Consider the following 127-residue polypeptide: Modulator protein MzrA (127 aa).

At 1 to 10 (MLKPRITARQ) the chain is on the cytoplasmic side. Residues 11-31 (LIWISAFLLMLTILMMTWSTL) traverse the membrane as a helical segment. At 32-127 (RQQESTLAIR…RLRESSHRFG (96 aa)) the chain is on the periplasmic side.

It belongs to the MzrA family. In terms of assembly, interacts with EnvZ.

The protein resides in the cell inner membrane. Modulates the activity of the EnvZ/OmpR two-component regulatory system, probably by directly modulating EnvZ enzymatic activity and increasing stability of phosphorylated OmpR. This is Modulator protein MzrA from Salmonella agona (strain SL483).